The sequence spans 364 residues: tRNA 2-selenouridine synthase (364 aa).

One can recognise a Rhodanese domain in the interval 14 to 137; it reads LIADTPIIDV…LRQTAIQATI (124 aa). Cys-97 functions as the S-selanylcysteine intermediate in the catalytic mechanism.

This sequence belongs to the SelU family. As to quaternary structure, monomer.

It catalyses the reaction 5-methylaminomethyl-2-thiouridine(34) in tRNA + selenophosphate + (2E)-geranyl diphosphate + H2O + H(+) = 5-methylaminomethyl-2-selenouridine(34) in tRNA + (2E)-thiogeraniol + phosphate + diphosphate. The enzyme catalyses 5-methylaminomethyl-2-thiouridine(34) in tRNA + (2E)-geranyl diphosphate = 5-methylaminomethyl-S-(2E)-geranyl-thiouridine(34) in tRNA + diphosphate. It carries out the reaction 5-methylaminomethyl-S-(2E)-geranyl-thiouridine(34) in tRNA + selenophosphate + H(+) = 5-methylaminomethyl-2-(Se-phospho)selenouridine(34) in tRNA + (2E)-thiogeraniol. The catalysed reaction is 5-methylaminomethyl-2-(Se-phospho)selenouridine(34) in tRNA + H2O = 5-methylaminomethyl-2-selenouridine(34) in tRNA + phosphate. Functionally, involved in the post-transcriptional modification of the uridine at the wobble position (U34) of tRNA(Lys), tRNA(Glu) and tRNA(Gln). Catalyzes the conversion of 2-thiouridine (S2U-RNA) to 2-selenouridine (Se2U-RNA). Acts in a two-step process involving geranylation of 2-thiouridine (S2U) to S-geranyl-2-thiouridine (geS2U) and subsequent selenation of the latter derivative to 2-selenouridine (Se2U) in the tRNA chain. This chain is tRNA 2-selenouridine synthase, found in Shigella boydii serotype 18 (strain CDC 3083-94 / BS512).